The following is a 239-amino-acid chain: Ribonuclease 3 (239 aa).

The RNase III domain maps to 11–133 (HTAIQKKLGY…MFAAVSFDAD (123 aa)). Position 46 (Glu-46) interacts with Mg(2+). The active site involves Asp-50. Positions 119 and 122 each coordinate Mg(2+). Glu-122 is an active-site residue. The DRBM domain occupies 160-230 (DGKTALQEAL…AKEALKWLEE (71 aa)).

The protein belongs to the ribonuclease III family. As to quaternary structure, homodimer. Mg(2+) is required as a cofactor.

The protein resides in the cytoplasm. It catalyses the reaction Endonucleolytic cleavage to 5'-phosphomonoester.. Digests double-stranded RNA. Involved in the processing of primary rRNA transcript to yield the immediate precursors to the large and small rRNAs (23S and 16S). Processes some mRNAs, and tRNAs when they are encoded in the rRNA operon. Processes pre-crRNA and tracrRNA of type II CRISPR loci if present in the organism. The chain is Ribonuclease 3 from Neisseria gonorrhoeae (strain ATCC 700825 / FA 1090).